The chain runs to 122 residues: Small ribosomal subunit protein uS13 (122 aa).

The tract at residues 98 to 122 (VRGQRTHTNARTRKGPAKAIAGKKK) is disordered.

It belongs to the universal ribosomal protein uS13 family. As to quaternary structure, part of the 30S ribosomal subunit. Forms a loose heterodimer with protein S19. Forms two bridges to the 50S subunit in the 70S ribosome.

Located at the top of the head of the 30S subunit, it contacts several helices of the 16S rRNA. In the 70S ribosome it contacts the 23S rRNA (bridge B1a) and protein L5 of the 50S subunit (bridge B1b), connecting the 2 subunits; these bridges are implicated in subunit movement. Contacts the tRNAs in the A and P-sites. This Jannaschia sp. (strain CCS1) protein is Small ribosomal subunit protein uS13.